The following is a 1072-amino-acid chain: Integrin alpha-6 (1072 aa).

The signal sequence occupies residues 1-18 (MAAALLLYLPLLPGLAGA). Topologically, residues 19 to 1010 (FNLDAENVIG…FPAKPVALYT (992 aa)) are extracellular. FG-GAP repeat units lie at residues 23-88 (AENV…DTRC), 94-160 (DEDT…IKDD), 170-223 (DGRL…FYDL), 238-295 (RQDK…QRAL), 296-357 (SLEH…KWEG), 358-413 (IKPI…GINT), and 414-476 (EPAQ…VQPD). Residue Asn71 is glycosylated (N-linked (GlcNAc...) asparagine). Disulfide bonds link Cys79/Cys88, Cys125/Cys148, and Cys169/Cys182. Residues Asn217 and Asn278 are each glycosylated (N-linked (GlcNAc...) asparagine). Asp318, Asn320, Asp322, and Asp326 together coordinate Ca(2+). An N-linked (GlcNAc...) asparagine glycan is attached at Asn364. Ca(2+) is bound by residues Asp380, Asn382, Asp384, Tyr386, Asp388, Asp438, Asp440, Asn442, Tyr444, and Asp446. An intrachain disulfide couples Cys498 to Cys557. N-linked (GlcNAc...) asparagine glycosylation is found at Asn515 and Asn609. Disulfide bonds link Cys625–Cys631 and Cys725–Cys736. N-linked (GlcNAc...) asparagine glycans are attached at residues Asn730, Asn747, and Asn780. 2 cysteine pairs are disulfide-bonded: Cys880-Cys927 and Cys933-Cys938. Asn957 is a glycosylation site (N-linked (GlcNAc...) asparagine). Residues 1011 to 1036 (GVPWWIIAVAIFAGVLMLALLVFLLW) form a helical membrane-spanning segment. Residues 1037–1072 (KCGFFKRSKKDHYDATYHKAEIHAQPSDKERLTSDA) lie on the Cytoplasmic side of the membrane. Cys1038 carries the S-palmitoyl cysteine; by DHHC3 lipid modification. The short motif at 1039–1043 (GFFKR) is the GFFKR motif element. Ser1070 bears the Phosphoserine; by CaMK2 mark.

Belongs to the integrin alpha chain family. Heterodimer of an alpha and a beta subunit. The alpha subunit is composed of a heavy and a light chain linked by a disulfide bond. Alpha-6 associates with either beta-1 (ITGB1) or beta-4 (ITGB4) to form ITGA6:ITGB1 and ITGA6:ITGB4, respectively. In terms of processing, phosphorylated in vivo.

Its subcellular location is the cell membrane. Its function is as follows. Integrin alpha-6/beta-1 (ITGA6:ITGB1) is a receptor for laminin on platelets. Integrin alpha-6/beta-1 (ITGA6:ITGB1) is present in oocytes and is involved in sperm-egg fusion. Integrin alpha-6/beta-4 (ITGA6:ITGB4) is a receptor for laminin in epithelial cells and it plays a critical structural role in the hemidesmosome. The polypeptide is Integrin alpha-6 (ITGA6) (Gallus gallus (Chicken)).